Here is a 237-residue protein sequence, read N- to C-terminus: MDIKLVYSTSDPVGLTIKKLGYSFEEIDEDVTDFHYKNGEAIVIFSRHESKASIPSLTVHYPGNPSEEVMGGEPKKLGIAYPRLLTSILREIKKIDLDIEKTMEATHHGPTYQNVPVIFVEIGSDKTYWTNERIVRTLVDSTLKGIDKVDETDCRDYISGFGGPHYSKLFTKLADESCIGHVISKHYVDKLDDKVIIQAIANSVNNINKVVIDSLNLKQRERIIAALKSFDIHIQLR.

Belongs to the DtdA deacylase family. Monomer. Requires Zn(2+) as cofactor.

The catalysed reaction is a D-aminoacyl-tRNA + H2O = a tRNA + a D-alpha-amino acid + H(+). It carries out the reaction glycyl-tRNA(Ala) + H2O = tRNA(Ala) + glycine + H(+). D-aminoacyl-tRNA deacylase with broad substrate specificity. By recycling D-aminoacyl-tRNA to D-amino acids and free tRNA molecules, this enzyme counteracts the toxicity associated with the formation of D-aminoacyl-tRNA entities in vivo. This is D-aminoacyl-tRNA deacylase from Saccharolobus islandicus (strain Y.N.15.51 / Yellowstone #2) (Sulfolobus islandicus).